A 647-amino-acid polypeptide reads, in one-letter code: XK-related protein 4 (647 aa).

The helical transmembrane segment at 142 to 162 threads the bilayer; that stretch reads WFGLTLFFVVLGSLSVQVFSF. The segment at 193–238 is disordered; it reads VSSGSAAGEGEARPSTPQRQASNASKSNIAATNSGSNSNGATRTSG. Serine 197 is modified (phosphoserine). A compositionally biased stretch (polar residues) spans 207–236; the sequence is STPQRQASNASKSNIAATNSGSNSNGATRT. 7 helical membrane passes run 245–265, 328–348, 362–382, 393–415, 425–445, 454–474, and 484–504; these read CSFC…GQVW, LQAL…WALA, KPIS…TIAA, VFQL…WIVH, WEEI…WFNV, LFIY…LWYL, and FAIP…VFML.

The protein belongs to the XK family. Homodimer; homodimerization takes place upon caspase cleavage. Interacts with the processed C-terminus of XRCC4 (protein XRCC4, C-terminus); interaction promotes the phospholipid scramblase activity. Post-translationally, undergoes proteolytic processing by caspase-3 (CASP3), caspase-6 (CASP6) and caspase-7 (CASP7) to generate the XK-related protein 4, processed form, leading to its activation.

It is found in the cell membrane. The enzyme catalyses a 1,2-diacyl-sn-glycero-3-phospho-L-serine(in) = a 1,2-diacyl-sn-glycero-3-phospho-L-serine(out). Its activity is regulated as follows. Phospholipid scramblase activity is activated upon caspase cleavage to generate the XK-related protein 4, processed form. Does not act prior the onset of apoptosis. With respect to regulation, homodimerizes upon caspase cleavage. Phospholipid scramblase activity is activated following interaction with the processed C-terminus of XRCC4 (protein XRCC4, C-terminus). Phospholipid scramblase that promotes phosphatidylserine exposure on apoptotic cell surface. Phosphatidylserine is a specific marker only present at the surface of apoptotic cells and acts as a specific signal for engulfment. This is XK-related protein 4 from Rattus norvegicus (Rat).